The sequence spans 218 residues: Mediator of RNA polymerase II transcription subunit 20 (218 aa).

It belongs to the Mediator complex subunit 20 family. As to quaternary structure, component of the Mediator complex.

The protein resides in the nucleus. Functionally, component of the Mediator complex, a coactivator involved in the regulated transcription of nearly all RNA polymerase II-dependent genes. Mediator functions as a bridge to convey information from gene-specific regulatory proteins to the basal RNA polymerase II transcription machinery. Mediator is recruited to promoters by direct interactions with regulatory proteins and serves as a scaffold for the assembly of a functional preinitiation complex with RNA polymerase II and the general transcription factors. In Anopheles gambiae (African malaria mosquito), this protein is Mediator of RNA polymerase II transcription subunit 20 (MED20).